Reading from the N-terminus, the 807-residue chain is Glucocorticoid receptor (807 aa).

Disordered regions lie at residues 1–47, 246–284, and 412–438; these read MDQG…LPSP, TDVNGTDQQHPLQHHQHQQQQHRHLLQHQQHQLHHQHQQ, and FSVSFSSSSPRTGENSSSAVPGLSKPS. The interval 1–444 is modulating; the sequence is MDQGGLKRNC…SKPSGPTHKI (444 aa). Basic residues predominate over residues 257 to 282; sequence LQHHQHQQQQHRHLLQHQQHQLHHQH. The segment covering 412-421 has biased composition (low complexity); it reads FSVSFSSSSP. 2 NR C4-type zinc fingers span residues 445–465 and 490–514; these read CLVCSDEASGCHYGVVTCGSC and CAGRNDCIIDKIRRKNCPACRFRKC. The segment at residues 445–519 is a DNA-binding region (nuclear receptor); that stretch reads CLVCSDEASG…RFRKCLQAGM (75 aa). The hinge stretch occupies residues 520–553; it reads NLEARKNKKLIKMKVHRPTGSAEPISNMPVPVIP. The region spanning 554-788 is the NR LBD domain; it reads RMPQLVPTML…FPEMLAEIIT (235 aa).

It belongs to the nuclear hormone receptor family. NR3 subfamily. Heteromultimeric cytoplasmic complex with HSP90. Upon ligand binding the complex undergoes a conformation change and moves to the nucleus, where it dissociates. Binds to DNA as a homodimer, and as heterodimer with NR3C2. Interaction with numerous other transcription factors modulates transcription activation.

The protein localises to the cytoplasm. It is found in the nucleus. The protein resides in the mitochondrion. Its subcellular location is the cytoskeleton. It localises to the spindle. The protein localises to the microtubule organizing center. It is found in the centrosome. Its function is as follows. Receptor for glucocorticoids (GC). Has a dual mode of action: as a transcription factor that binds to glucocorticoid response elements (GRE), both for nuclear and mitochondrial DNA, and as a modulator of other transcription factors. Affects inflammatory responses, cellular proliferation and differentiation in target tissues. Involved in chromatin remodeling. Plays a role in rapid mRNA degradation by binding to the 5' UTR of target mRNAs and interacting with PNRC2 in a ligand-dependent manner which recruits the RNA helicase UPF1 and the mRNA-decapping enzyme DCP1A, leading to RNA decay. Could act as a coactivator for STAT5-dependent transcription upon growth hormone (GH) stimulation and could reveal an essential role of hepatic GR in the control of body growth. Mediates glucocorticoid-induced apoptosis. Promotes accurate chromosome segregation during mitosis. May act as a tumor suppressor. May play a negative role in adipogenesis through the regulation of lipolytic and antilipogenic gene expression. In Paralichthys olivaceus (Bastard halibut), this protein is Glucocorticoid receptor (nr3c1).